We begin with the raw amino-acid sequence, 298 residues long: MLYLIGLGLSYKSDITVRGLEAVKNCTRVYLEHYTSILMAASKEELEEFYGKEVILADRELVESGSADILRDADKENVAFLVVGDPFGATTHTDLVLRAKKDKIPVEVIHNASVMNAVGSCGLQLYNFGQTISMVFFTDSWRPDSWYDKVMENRKIGLHTLVLLDIKVKEQSLENMARGRLIYEPPRYMSIAQCCQQLLEIEELRAEKAYTADTPVVGISRLGSPTQSFKAGTIKELAEYDAGEPLHSLVILGRQSHELELEYLLEFTDNKEKFKNDVIADQEYFKPAPWVPPVEEED.

S-adenosyl-L-methionine contacts are provided by residues L9, D85, G88, S113 to V114, L164, L222, and H247.

The protein belongs to the diphthine synthase family.

It localises to the cytoplasm. The catalysed reaction is 2-[(3S)-amino-3-carboxypropyl]-L-histidyl-[translation elongation factor 2] + 4 S-adenosyl-L-methionine = diphthine methyl ester-[translation elongation factor 2] + 4 S-adenosyl-L-homocysteine + 3 H(+). It participates in protein modification; peptidyl-diphthamide biosynthesis. Its function is as follows. S-adenosyl-L-methionine-dependent methyltransferase that catalyzes four methylations of the modified target histidine residue in translation elongation factor 2 (EF-2), to form an intermediate called diphthine methyl ester. The four successive methylation reactions represent the second step of diphthamide biosynthesis. The polypeptide is Diphthine methyl ester synthase (DPH5) (Candida glabrata (strain ATCC 2001 / BCRC 20586 / JCM 3761 / NBRC 0622 / NRRL Y-65 / CBS 138) (Yeast)).